The sequence spans 407 residues: Probable tRNA sulfurtransferase (407 aa).

Positions 61–165 constitute a THUMP domain; the sequence is NEITNRLSKI…LDAIYMYEEV (105 aa). Residues 183–184, 208–209, Arg265, Gly287, and Gln296 each bind ATP; these read ML and HF.

The protein belongs to the ThiI family.

The protein resides in the cytoplasm. The enzyme catalyses [ThiI sulfur-carrier protein]-S-sulfanyl-L-cysteine + a uridine in tRNA + 2 reduced [2Fe-2S]-[ferredoxin] + ATP + H(+) = [ThiI sulfur-carrier protein]-L-cysteine + a 4-thiouridine in tRNA + 2 oxidized [2Fe-2S]-[ferredoxin] + AMP + diphosphate. It carries out the reaction [ThiS sulfur-carrier protein]-C-terminal Gly-Gly-AMP + S-sulfanyl-L-cysteinyl-[cysteine desulfurase] + AH2 = [ThiS sulfur-carrier protein]-C-terminal-Gly-aminoethanethioate + L-cysteinyl-[cysteine desulfurase] + A + AMP + 2 H(+). It participates in cofactor biosynthesis; thiamine diphosphate biosynthesis. In terms of biological role, catalyzes the ATP-dependent transfer of a sulfur to tRNA to produce 4-thiouridine in position 8 of tRNAs, which functions as a near-UV photosensor. Also catalyzes the transfer of sulfur to the sulfur carrier protein ThiS, forming ThiS-thiocarboxylate. This is a step in the synthesis of thiazole, in the thiamine biosynthesis pathway. The sulfur is donated as persulfide by IscS. The chain is Probable tRNA sulfurtransferase from Staphylococcus aureus (strain MRSA252).